An 838-amino-acid polypeptide reads, in one-letter code: Translation initiation factor IF-2 (838 aa).

Disordered regions lie at residues 30–60 (PHTAAEEHVSDSEKQSLLTHLKSSHKAKVEE) and 94–254 (QRSP…PTGP). Basic and acidic residues-rich tracts occupy residues 33-43 (AAEEHVSDSEK) and 96-136 (SPEE…EARR). Residues 137–173 (QPAPVAEPVAAQAAAPAPAPVVEPVQEAPVATAAPAA) show a composition bias toward low complexity. 2 stretches are compositionally biased toward basic and acidic residues: residues 174-214 (DARK…EKAP) and 222-231 (TTDEESDGFR). The span at 232–245 (RGGRGKAKLKKRNA) shows a compositional bias: basic residues. Residues 338–507 (ARAPVVTVMG…LLQAEVLELK (170 aa)) enclose the tr-type G domain. A G1 region spans residues 347 to 354 (GHVDHGKT). Position 347 to 354 (347 to 354 (GHVDHGKT)) interacts with GTP. The tract at residues 372-376 (GITQH) is G2. A G3 region spans residues 393-396 (DTPG). Residues 393–397 (DTPGH) and 447–450 (NKID) contribute to the GTP site. The tract at residues 447-450 (NKID) is G4. The G5 stretch occupies residues 483 to 485 (SAK).

The protein belongs to the TRAFAC class translation factor GTPase superfamily. Classic translation factor GTPase family. IF-2 subfamily.

Its subcellular location is the cytoplasm. One of the essential components for the initiation of protein synthesis. Protects formylmethionyl-tRNA from spontaneous hydrolysis and promotes its binding to the 30S ribosomal subunits. Also involved in the hydrolysis of GTP during the formation of the 70S ribosomal complex. The chain is Translation initiation factor IF-2 from Pseudomonas fluorescens (strain ATCC BAA-477 / NRRL B-23932 / Pf-5).